The chain runs to 237 residues: MIEAESQMAEAASYEEQRRRQVEANKRKLEELRLHHLSAAVRESASKPSPVKQRKRKARALPGAGEDAPLRRSGRVANLPEKPKYRDEFQDFEKRIRRSYGGKRRDLSNRVYATDEQRDYAINAAQELEEELGSDYPIFVKPMLQSHVTGGFWLSLPTHFSRKYLPKRDETIRLVDEEDDEFDTLYLANKRGLSGGWRGFSIAHKLVDGDCLVFQLIQRTKFKVYIIRASSYYETDD.

2 disordered regions span residues 1–23 (MIEA…RQVE) and 38–82 (SAAV…LPEK). A DNA-binding region (TF-B3) is located at residues 139–230 (FVKPMLQSHV…KFKVYIIRAS (92 aa)).

It is found in the nucleus. The chain is B3 domain-containing protein Os06g0194400 from Oryza sativa subsp. japonica (Rice).